The primary structure comprises 259 residues: Zinc import ATP-binding protein ZnuC (259 aa).

An ABC transporter domain is found at 22–238 (VEARGLTVRR…PEYRALFGAH (217 aa)). Residue 54 to 61 (GPNGSGKS) participates in ATP binding.

Belongs to the ABC transporter superfamily. Zinc importer (TC 3.A.1.15.5) family. The complex is composed of two ATP-binding proteins (ZnuC), two transmembrane proteins (ZnuB) and a solute-binding protein (ZnuA).

It localises to the cell inner membrane. The enzyme catalyses Zn(2+)(out) + ATP(in) + H2O(in) = Zn(2+)(in) + ADP(in) + phosphate(in) + H(+)(in). Functionally, part of the ABC transporter complex ZnuABC involved in zinc import. Responsible for energy coupling to the transport system. The chain is Zinc import ATP-binding protein ZnuC from Alkalilimnicola ehrlichii (strain ATCC BAA-1101 / DSM 17681 / MLHE-1).